We begin with the raw amino-acid sequence, 275 residues long: Autophagy protein 5 (275 aa).

An N-acetylmethionine modification is found at Met1. Lys130 is covalently cross-linked (Glycyl lysine isopeptide (Lys-Gly) (interchain with G-Cter in ATG12)).

Belongs to the ATG5 family. In terms of assembly, forms a conjugate with ATG12. Part of the minor complex composed of 4 sets of ATG12-ATG5 and ATG16L1 (400 kDa); this complex interacts with ATG3 leading to disruption of ATG7 interaction and promotion of ATG8-like proteins lipidation. Forms an 800-kDa complex composed of ATG12-ATG5 and ATG16L2. The ATG12-ATG5 conjugate interacts with RAB33A; this interaction is bridged by ATG16L1 and promotes ATG12-ATG5-ATG16L1 complex recruitment to phagophores. Interacts with TECPR1; the interaction is direct and does not take place when ATG16L1 is associated with the ATG5-ATG12 conjugate. Interacts with DHX58/RIG-1, IFIH1/MDA5 and MAVS/IPS-1 in monomeric form as well as in ATG12-ATG5 conjugate form. The interaction with MAVS is further enhanced upon vesicular stomatitis virus (VSV) infection. Interacts with ATG3. Interacts with ATG7 and ATG10. Interacts with FADD. Interacts with Bassoon/BSN; this interaction is important for the regulation of presynaptic autophagy. Interacts with ATG16L2. In terms of processing, conjugated to ATG12; which is essential for autophagy, but is not required for association with isolation membrane. Acetylated by EP300. In terms of tissue distribution, ubiquitous.

It is found in the cytoplasm. The protein resides in the preautophagosomal structure membrane. Its function is as follows. Involved in autophagic vesicle formation. Conjugation with ATG12, through a ubiquitin-like conjugating system involving ATG7 as an E1-like activating enzyme and ATG10 as an E2-like conjugating enzyme, is essential for its function. The ATG12-ATG5 conjugate acts as an E3-like enzyme which is required for lipidation of ATG8 family proteins and their association to the vesicle membranes. Involved in mitochondrial quality control after oxidative damage, and in subsequent cellular longevity. Plays a critical role in multiple aspects of lymphocyte development and is essential for both B and T lymphocyte survival and proliferation. Required for optimal processing and presentation of antigens for MHC II. Involved in the maintenance of axon morphology and membrane structures, as well as in normal adipocyte differentiation. Promotes primary ciliogenesis through removal of OFD1 from centriolar satellites and degradation of IFT20 via the autophagic pathway. As part of the ATG8 conjugation system with ATG12 and ATG16L1, required for recruitment of LRRK2 to stressed lysosomes and induction of LRRK2 kinase activity in response to lysosomal stress. May play an important role in the apoptotic process, possibly within the modified cytoskeleton. Its expression is a relatively late event in the apoptotic process, occurring downstream of caspase activity. Plays a crucial role in IFN-gamma-induced autophagic cell death by interacting with FADD. Functionally, (Microbial infection) May act as a proviral factor. In association with ATG12, negatively regulates the innate antiviral immune response by impairing the type I IFN production pathway upon vesicular stomatitis virus (VSV) infection. The chain is Autophagy protein 5 from Mus musculus (Mouse).